Consider the following 251-residue polypeptide: Flap endonuclease Xni (251 aa).

Asp104 is a Mg(2+) binding site. The 90-residue stretch at 160-249 (VQPQQLPDYW…IDGNLQQLRL (90 aa)) folds into the 5'-3' exonuclease domain. The K(+) site is built by Leu171, Ala172, Pro180, Val182, and Ile185. Residues 184–189 (GIGPKS) form an interaction with DNA region.

This sequence belongs to the Xni family. The cofactor is Mg(2+). Requires K(+) as cofactor.

Its function is as follows. Has flap endonuclease activity. During DNA replication, flap endonucleases cleave the 5'-overhanging flap structure that is generated by displacement synthesis when DNA polymerase encounters the 5'-end of a downstream Okazaki fragment. This chain is Flap endonuclease Xni, found in Escherichia coli O7:K1 (strain IAI39 / ExPEC).